We begin with the raw amino-acid sequence, 300 residues long: 4-hydroxy-tetrahydrodipicolinate synthase (300 aa).

Threonine 53 provides a ligand contact to pyruvate. The Proton donor/acceptor role is filled by tyrosine 141. Lysine 169 acts as the Schiff-base intermediate with substrate in catalysis. Threonine 211 provides a ligand contact to pyruvate.

Belongs to the DapA family. In terms of assembly, homotetramer; dimer of dimers.

The protein localises to the cytoplasm. It catalyses the reaction L-aspartate 4-semialdehyde + pyruvate = (2S,4S)-4-hydroxy-2,3,4,5-tetrahydrodipicolinate + H2O + H(+). It participates in amino-acid biosynthesis; L-lysine biosynthesis via DAP pathway; (S)-tetrahydrodipicolinate from L-aspartate: step 3/4. Its function is as follows. Catalyzes the condensation of (S)-aspartate-beta-semialdehyde [(S)-ASA] and pyruvate to 4-hydroxy-tetrahydrodipicolinate (HTPA). The chain is 4-hydroxy-tetrahydrodipicolinate synthase from Rickettsia massiliae (strain Mtu5).